Reading from the N-terminus, the 333-residue chain is MNLTLKDFHVPNEWNVKSINDNSFIQECYQKAIEMNIYDKSDEKGKAVMYHALTVCPAFWPTVTYDQLVLSGYLMLWLILFDDDLDTVFIPDDEATEIINRTELIFLEGILPTNPTKKEEFTLFFRNQVLKMSGNRLDMFNLFLNYTIQWIHSIIPLNKTIEPHMDLFLFIRKLNVGVYPLIGLSCIFFSNDKIDQSLFLNPRWLKLCEATSIVTALYNDCVSYAKEVKGNAGVNNCLWFLQKKNNTSIQDTFKYICEKSNMYIKEFQNHEEKLLNQYNNIQPLATLLNSLKYIMNGKYYWSMNTARYASPSSPFIEIQNAVSPDNKLINNEL.

The DDxx(x)D/E motif signature appears at 82–87 (DDDLDT). Positions 219 to 227 (NDCVSYAKE) match the NDxxSxxxD/E motif motif.

This sequence belongs to the terpene synthase family.

The enzyme catalyses (2E,6E)-farnesyl diphosphate = (E)-beta-farnesene + diphosphate. It carries out the reaction (2E,6E)-farnesyl diphosphate = (1S,2S,4R)-beta-elemene + diphosphate. Its function is as follows. Terpene synthase that converts its substrate farnesyl diphosphate (FPP) into the sesquiterpene (E)-beta-farnesene as major product. Is also able to convert FPP into delta-elemene, beta-elemene, (E)-beta-caryophyllene, 9-epi-(E)-caryophyllene, and a yet unidentified sesquiterpene. The chain is Terpene synthase 2 from Dictyostelium purpureum (Slime mold).